A 90-amino-acid polypeptide reads, in one-letter code: Probable Fe(2+)-trafficking protein (90 aa).

It belongs to the Fe(2+)-trafficking protein family.

Could be a mediator in iron transactions between iron acquisition and iron-requiring processes, such as synthesis and/or repair of Fe-S clusters in biosynthetic enzymes. The polypeptide is Probable Fe(2+)-trafficking protein (Acidovorax ebreus (strain TPSY) (Diaphorobacter sp. (strain TPSY))).